Reading from the N-terminus, the 346-residue chain is Phosphoribosylformylglycinamidine cyclo-ligase (346 aa).

This sequence belongs to the AIR synthase family.

The protein localises to the cytoplasm. It carries out the reaction 2-formamido-N(1)-(5-O-phospho-beta-D-ribosyl)acetamidine + ATP = 5-amino-1-(5-phospho-beta-D-ribosyl)imidazole + ADP + phosphate + H(+). It participates in purine metabolism; IMP biosynthesis via de novo pathway; 5-amino-1-(5-phospho-D-ribosyl)imidazole from N(2)-formyl-N(1)-(5-phospho-D-ribosyl)glycinamide: step 2/2. In Geobacillus sp. (strain WCH70), this protein is Phosphoribosylformylglycinamidine cyclo-ligase.